We begin with the raw amino-acid sequence, 111 residues long: MLGRALRPGWLGITRTVVKKPSCGSYFNRTFQTAINTTMPPMQEGMLSTMMMMTATATRITGTVSEPLNGSNIVMQLDSVMRKRKKKMKKHKLRKRRKREKAERRKLSQGR.

Basic residues predominate over residues 82 to 99 (RKRKKKMKKHKLRKRRKR). Positions 82–111 (RKRKKKMKKHKLRKRRKREKAERRKLSQGR) are disordered. Residues 100 to 111 (EKAERRKLSQGR) show a composition bias toward basic and acidic residues.

This sequence belongs to the mitochondrion-specific ribosomal protein mS38 family. Component of the mitochondrial small ribosomal subunit (mt-SSU). Mature yeast 74S mitochondrial ribosomes consist of a small (37S) and a large (54S) subunit. The 37S small subunit contains a 15S ribosomal RNA (15S mt-rRNA) and 34 different proteins. The 54S large subunit contains a 21S rRNA (21S mt-rRNA) and 46 different proteins.

The protein localises to the mitochondrion. It localises to the mitochondrion inner membrane. In terms of biological role, component of the mitochondrial ribosome (mitoribosome), a dedicated translation machinery responsible for the synthesis of mitochondrial genome-encoded proteins, including at least some of the essential transmembrane subunits of the mitochondrial respiratory chain. The mitoribosomes are attached to the mitochondrial inner membrane and translation products are cotranslationally integrated into the membrane. mS38 is also involved in the splicing of the COX1 mRNA. This is Small ribosomal subunit protein mS38 (QRI5) from Saccharomyces cerevisiae (strain ATCC 204508 / S288c) (Baker's yeast).